The following is an 829-amino-acid chain: Leucine--tRNA ligase (829 aa).

Positions 42–52 (PYPSGRIHMGH) match the 'HIGH' region motif. The 'KMSKS' region motif lies at 584–588 (KMSKS). K587 provides a ligand contact to ATP.

Belongs to the class-I aminoacyl-tRNA synthetase family.

It localises to the cytoplasm. The enzyme catalyses tRNA(Leu) + L-leucine + ATP = L-leucyl-tRNA(Leu) + AMP + diphosphate. In Syntrophobacter fumaroxidans (strain DSM 10017 / MPOB), this protein is Leucine--tRNA ligase.